The sequence spans 283 residues: Pantothenate synthetase (283 aa).

M34–H41 contributes to the ATP binding site. H41 (proton donor) is an active-site residue. Q65 is a binding site for (R)-pantoate. Q65 is a binding site for beta-alanine. G152 to D155 lines the ATP pocket. A (R)-pantoate-binding site is contributed by Q158. ATP is bound by residues V181 and M189–R192.

This sequence belongs to the pantothenate synthetase family. In terms of assembly, homodimer.

Its subcellular location is the cytoplasm. It carries out the reaction (R)-pantoate + beta-alanine + ATP = (R)-pantothenate + AMP + diphosphate + H(+). It participates in cofactor biosynthesis; (R)-pantothenate biosynthesis; (R)-pantothenate from (R)-pantoate and beta-alanine: step 1/1. Functionally, catalyzes the condensation of pantoate with beta-alanine in an ATP-dependent reaction via a pantoyl-adenylate intermediate. The protein is Pantothenate synthetase of Rhodopseudomonas palustris (strain ATCC BAA-98 / CGA009).